The chain runs to 269 residues: 5'-nucleotidase SurE (269 aa).

A divalent metal cation-binding residues include Asp-11, Asp-12, Ser-43, and Asn-101.

It belongs to the SurE nucleotidase family. A divalent metal cation serves as cofactor.

Its subcellular location is the cytoplasm. The enzyme catalyses a ribonucleoside 5'-phosphate + H2O = a ribonucleoside + phosphate. Functionally, nucleotidase that shows phosphatase activity on nucleoside 5'-monophosphates. The chain is 5'-nucleotidase SurE from Synechococcus sp. (strain CC9902).